We begin with the raw amino-acid sequence, 101 residues long: Small ribosomal subunit protein uS10 (101 aa).

Belongs to the universal ribosomal protein uS10 family. As to quaternary structure, part of the 30S ribosomal subunit.

In terms of biological role, involved in the binding of tRNA to the ribosomes. This chain is Small ribosomal subunit protein uS10, found in Ureaplasma parvum serovar 3 (strain ATCC 27815 / 27 / NCTC 11736).